Here is a 175-residue protein sequence, read N- to C-terminus: Peptide deformylase (175 aa).

The Fe cation site is built by C92 and H134. The active site involves E135. H138 contributes to the Fe cation binding site.

It belongs to the polypeptide deformylase family. The cofactor is Fe(2+).

It carries out the reaction N-terminal N-formyl-L-methionyl-[peptide] + H2O = N-terminal L-methionyl-[peptide] + formate. Removes the formyl group from the N-terminal Met of newly synthesized proteins. Requires at least a dipeptide for an efficient rate of reaction. N-terminal L-methionine is a prerequisite for activity but the enzyme has broad specificity at other positions. In Blochmanniella floridana, this protein is Peptide deformylase.